Consider the following 419-residue polypeptide: UPF0761 membrane protein ACIAD3168 (419 aa).

The next 6 membrane-spanning stretches (helical) occupy residues 42 to 62 (ALTY…LVII), 105 to 125 (LTVI…STIE), 148 to 168 (WTII…SSTV), 186 to 206 (AFIL…ILYW), 212 to 232 (TVPM…FELL), and 252 to 272 (AFAA…IVLL).

It belongs to the UPF0761 family.

It is found in the cell inner membrane. The polypeptide is UPF0761 membrane protein ACIAD3168 (Acinetobacter baylyi (strain ATCC 33305 / BD413 / ADP1)).